Here is a 35-residue protein sequence, read N- to C-terminus: Conotoxin Cal6.1g (35 aa).

A propeptide spanning residues 1 to 8 (GLSRPSKR) is cleaved from the precursor. 3 disulfide bridges follow: Cys9/Cys25, Cys16/Cys29, and Cys24/Cys34.

Belongs to the conotoxin O1 superfamily. Expressed by the venom duct.

Its subcellular location is the secreted. Its function is as follows. Probable neurotoxin with unknown target. Possibly targets ion channels. The polypeptide is Conotoxin Cal6.1g (Californiconus californicus (California cone)).